We begin with the raw amino-acid sequence, 190 residues long: Potassium-transporting ATPase KdpC subunit (190 aa).

Residues 10–30 (LLVFLTILTGGVYPLATTVLG) form a helical membrane-spanning segment.

This sequence belongs to the KdpC family. In terms of assembly, the system is composed of three essential subunits: KdpA, KdpB and KdpC.

It localises to the cell inner membrane. In terms of biological role, part of the high-affinity ATP-driven potassium transport (or Kdp) system, which catalyzes the hydrolysis of ATP coupled with the electrogenic transport of potassium into the cytoplasm. This subunit acts as a catalytic chaperone that increases the ATP-binding affinity of the ATP-hydrolyzing subunit KdpB by the formation of a transient KdpB/KdpC/ATP ternary complex. This is Potassium-transporting ATPase KdpC subunit from Cronobacter sakazakii (strain ATCC BAA-894) (Enterobacter sakazakii).